The chain runs to 582 residues: Hemagglutinin-neuraminidase (582 aa).

Residues 1–34 are Intravirion-facing; the sequence is MEPSKLFIMSDNATVAPGPVVNAAGKKTFRTCFR. Residues 35–55 traverse the membrane as a helical; Signal-anchor for type II membrane protein segment; the sequence is ILVLSVQAVTLILVIVTLGEL. Residues 56–582 are Virion surface-facing; it reads IRMINDQGLS…LPVLARLTIT (527 aa). 3 disulfide bridges follow: cysteine 178–cysteine 202, cysteine 192–cysteine 253, and cysteine 244–cysteine 257. The segment at 240–245 is involved in neuraminidase activity; that stretch reads NRKSCS. Residues asparagine 284 and asparagine 329 are each glycosylated (N-linked (GlcNAc...) asparagine; by host). Cystine bridges form between cysteine 350/cysteine 471, cysteine 382/cysteine 392, and cysteine 465/cysteine 475. N-linked (GlcNAc...) asparagine; by host glycans are attached at residues asparagine 400 and asparagine 448. N-linked (GlcNAc...) asparagine; by host glycosylation is present at asparagine 507. A disulfide bond links cysteine 545 and cysteine 556.

Belongs to the paramyxoviruses hemagglutinin-neuraminidase family. As to quaternary structure, homotetramer; composed of disulfide-linked homodimers. Interacts with F protein trimer.

The protein localises to the virion membrane. It localises to the host cell membrane. It catalyses the reaction Hydrolysis of alpha-(2-&gt;3)-, alpha-(2-&gt;6)-, alpha-(2-&gt;8)- glycosidic linkages of terminal sialic acid residues in oligosaccharides, glycoproteins, glycolipids, colominic acid and synthetic substrates.. Functionally, attaches the virus to alpha-2,3-linked sialic acid-containing cell receptors and thereby initiating infection. Binding of HN protein to the receptor induces a conformational change that allows the F protein to trigger virion/cell membranes fusion. Binds to the glycan motifs sialyl Lewis (SLe) and GM2 ganglioside (GM2-glycan). Its function is as follows. Neuraminidase activity ensures the efficient spread of the virus by dissociating the mature virions from the neuraminic acid containing glycoproteins. In Homo sapiens (Human), this protein is Hemagglutinin-neuraminidase (HN).